The following is a 247-amino-acid chain: Adenosylcobinamide-GDP ribazoletransferase (247 aa).

The next 6 helical transmembrane spans lie at 31 to 51, 55 to 75, 109 to 129, 135 to 155, 183 to 203, and 227 to 247; these read ILFY…VTCI, LPAL…TGGL, IGVL…YVLI, LFLI…FLTT, VLLL…SFLI, and AIEI…FYLV.

It belongs to the CobS family. Mg(2+) serves as cofactor.

The protein resides in the cell inner membrane. The enzyme catalyses alpha-ribazole + adenosylcob(III)inamide-GDP = adenosylcob(III)alamin + GMP + H(+). The catalysed reaction is alpha-ribazole 5'-phosphate + adenosylcob(III)inamide-GDP = adenosylcob(III)alamin 5'-phosphate + GMP + H(+). It functions in the pathway cofactor biosynthesis; adenosylcobalamin biosynthesis; adenosylcobalamin from cob(II)yrinate a,c-diamide: step 7/7. Functionally, joins adenosylcobinamide-GDP and alpha-ribazole to generate adenosylcobalamin (Ado-cobalamin). Also synthesizes adenosylcobalamin 5'-phosphate from adenosylcobinamide-GDP and alpha-ribazole 5'-phosphate. The chain is Adenosylcobinamide-GDP ribazoletransferase from Acinetobacter baumannii (strain ACICU).